The sequence spans 161 residues: Alpha-crystallin A chain (161 aa).

Position 1 is an N-acetylmethionine (M1). A required for complex formation with BFSP1 and BFSP2 region spans residues 1–53 (MDVTIQHPWFKRALGPFYHNRLFDQFFGEGLFEYDLLPFQSLFRTVLDSGISE). Deamidated glutamine; partial occurs at positions 6 and 40. A sHSP domain is found at 41 to 150 (SLFRTVLDSG…SHSERAIPVS (110 aa)). K87 carries the post-translational modification N6-acetyllysine. H88 contacts Zn(2+). N89 is modified (deamidated asparagine; partial). Positions 90 and 95 each coordinate Zn(2+). S110 carries the phosphoserine modification. N111 carries the post-translational modification Deamidated asparagine; partial. A disulfide bond links C119 and C130. The residue at position 135 (Q135) is a Deamidated glutamine; partial. The interval 135–161 (QSGMDASHSERAIPVSREEKASSAPNS) is disordered. Basic and acidic residues predominate over residues 141–155 (SHSERAIPVSREEKA). A Zn(2+)-binding site is contributed by H142. The O-linked (GlcNAc) serine glycan is linked to S150.

The protein belongs to the small heat shock protein (HSP20) family. Heteromer composed of three CRYAA and one CRYAB subunits. Inter-subunit bridging via zinc ions enhances stability, which is crucial as there is no protein turn over in the lens. Can also form homodimers and homotetramers (dimers of dimers) which serve as the building blocks of homooligomers. Within homooligomers, the zinc-binding motif is created from residues of 3 different molecules. His-88 and Glu-90 from one molecule are ligands of the zinc ion, and His-95 and His-142 residues from additional molecules complete the site with tetrahedral coordination geometry. Part of a complex required for lens intermediate filament formation composed of BFSP1, BFSP2 and CRYAA. In terms of processing, undergoes age-dependent proteolytical cleavage at the C-terminus.

It is found in the cytoplasm. The protein localises to the nucleus. In terms of biological role, contributes to the transparency and refractive index of the lens. In its oxidized form (absence of intramolecular disulfide bond), acts as a chaperone, preventing aggregation of various proteins under a wide range of stress conditions. Required for the correct formation of lens intermediate filaments as part of a complex composed of BFSP1, BFSP2 and CRYAA. The polypeptide is Alpha-crystallin A chain (CRYAA) (Trichechus inunguis (Amazon manatee)).